The chain runs to 337 residues: S-adenosylmethionine:tRNA ribosyltransferase-isomerase (337 aa).

It belongs to the QueA family. In terms of assembly, monomer.

Its subcellular location is the cytoplasm. The catalysed reaction is 7-aminomethyl-7-carbaguanosine(34) in tRNA + S-adenosyl-L-methionine = epoxyqueuosine(34) in tRNA + adenine + L-methionine + 2 H(+). It participates in tRNA modification; tRNA-queuosine biosynthesis. Its function is as follows. Transfers and isomerizes the ribose moiety from AdoMet to the 7-aminomethyl group of 7-deazaguanine (preQ1-tRNA) to give epoxyqueuosine (oQ-tRNA). This chain is S-adenosylmethionine:tRNA ribosyltransferase-isomerase, found in Legionella pneumophila (strain Paris).